Consider the following 572-residue polypeptide: Flagellin A (572 aa).

It belongs to the bacterial flagellin family. As to quaternary structure, heteromer of FlaA and FlaB. Interacts with FliW.

The protein resides in the secreted. The protein localises to the bacterial flagellum. In terms of biological role, flagellin is the subunit protein which polymerizes to form the filaments of bacterial flagella. FlaA binds to flagellar assembly factor FliW protein, preventing FliW from binding to CsrA, so that CsrA can then bind flaA mRNA and represses its translation. The sequence is that of Flagellin A (flaA) from Campylobacter jejuni subsp. jejuni serotype O:2 (strain ATCC 700819 / NCTC 11168).